We begin with the raw amino-acid sequence, 719 residues long: Phosphoribosylformylglycinamidine synthase subunit PurL (719 aa).

The active site involves His-47. ATP-binding residues include Tyr-50 and Lys-89. Glu-91 is a Mg(2+) binding site. Substrate is bound by residues 92–95 (SHNH) and Arg-114. His-93 serves as the catalytic Proton acceptor. Asp-115 contacts Mg(2+). Gln-238 is a binding site for substrate. Asp-266 serves as a coordination point for Mg(2+). Residue 310 to 312 (ESQ) participates in substrate binding. ATP is bound by residues Asp-488 and Gly-525. Asn-526 lines the Mg(2+) pocket. Residue Ser-528 participates in substrate binding.

Belongs to the FGAMS family. Monomer. Part of the FGAM synthase complex composed of 1 PurL, 1 PurQ and 2 PurS subunits.

The protein localises to the cytoplasm. It catalyses the reaction N(2)-formyl-N(1)-(5-phospho-beta-D-ribosyl)glycinamide + L-glutamine + ATP + H2O = 2-formamido-N(1)-(5-O-phospho-beta-D-ribosyl)acetamidine + L-glutamate + ADP + phosphate + H(+). It functions in the pathway purine metabolism; IMP biosynthesis via de novo pathway; 5-amino-1-(5-phospho-D-ribosyl)imidazole from N(2)-formyl-N(1)-(5-phospho-D-ribosyl)glycinamide: step 1/2. In terms of biological role, part of the phosphoribosylformylglycinamidine synthase complex involved in the purines biosynthetic pathway. Catalyzes the ATP-dependent conversion of formylglycinamide ribonucleotide (FGAR) and glutamine to yield formylglycinamidine ribonucleotide (FGAM) and glutamate. The FGAM synthase complex is composed of three subunits. PurQ produces an ammonia molecule by converting glutamine to glutamate. PurL transfers the ammonia molecule to FGAR to form FGAM in an ATP-dependent manner. PurS interacts with PurQ and PurL and is thought to assist in the transfer of the ammonia molecule from PurQ to PurL. In Roseobacter denitrificans (strain ATCC 33942 / OCh 114) (Erythrobacter sp. (strain OCh 114)), this protein is Phosphoribosylformylglycinamidine synthase subunit PurL.